Consider the following 611-residue polypeptide: UvrABC system protein C (611 aa).

In terms of domain architecture, GIY-YIG spans 12–96 (DQPGIYQYFD…IKQLKPKYNI (85 aa)). Positions 202-237 (EKILEILNQKMQKYAENLQFEEAAEIRDRIKSIESA) constitute a UVR domain.

Belongs to the UvrC family. In terms of assembly, interacts with UvrB in an incision complex.

It is found in the cytoplasm. Functionally, the UvrABC repair system catalyzes the recognition and processing of DNA lesions. UvrC both incises the 5' and 3' sides of the lesion. The N-terminal half is responsible for the 3' incision and the C-terminal half is responsible for the 5' incision. The sequence is that of UvrABC system protein C from Nautilia profundicola (strain ATCC BAA-1463 / DSM 18972 / AmH).